A 239-amino-acid polypeptide reads, in one-letter code: UPF0641 membrane protein YHR140W (239 aa).

Over 1–11 (MMSCLVPTRFT) the chain is Cytoplasmic. A helical membrane pass occupies residues 12–31 (LTLNTACLLTSTWGFVRATS). Residues 32–45 (VVLPPSLSKAGHKQ) are Lumenal-facing. The chain crosses the membrane as a helical span at residues 46 to 66 (FLTIISIIATIINNAVNISNY). Residues 67-99 (YIQRNNKMNLETKKKSDFISRHVTLPVSLVLES) are Cytoplasmic-facing. A helical transmembrane segment spans residues 100–120 (IVATVYWPLRLFFVNLIMHGV). The Lumenal portion of the chain corresponds to 121–125 (ESTAK). Residues 126–146 (TPFPMTVDMAIHLYPILYLLA) form a helical membrane-spanning segment. Residues 147-162 (DHYLSGSGTKFKLSNK) are Cytoplasmic-facing. The helical transmembrane segment at 163-183 (HAWLIVTSLAFSYFQYLAFLI) threads the bilayer. Residues 184–204 (DAGQGQAYPYPFLDVNEPYKS) lie on the Lumenal side of the membrane. A helical membrane pass occupies residues 205 to 225 (IIFVVVATITWAYYVFYQKFP). Residues 226–239 (PKYIKKSAKKGDKN) are Cytoplasmic-facing.

The protein belongs to the UPF0641 family.

It is found in the endoplasmic reticulum membrane. This Saccharomyces cerevisiae (strain ATCC 204508 / S288c) (Baker's yeast) protein is UPF0641 membrane protein YHR140W.